The sequence spans 753 residues: Rsm22-cox11 tandem protein 2, mitochondrial (753 aa).

The transit peptide at 1 to 39 (MPILTCRYKILFLYNLRNCFTFQNQRCLIPYGTTTTIRW) directs the protein to the mitochondrion. Residues Cys-323, Cys-329, Cys-342, and Cys-430 each coordinate [4Fe-4S] cluster. The helical transmembrane segment at 571–591 (IYYLVAISIFALGLTYAAVPL) threads the bilayer. Residues 592-753 (YRLFCSKTGY…TNGNLLTKLN (162 aa)) are Mitochondrial intermembrane-facing.

In the N-terminal section; belongs to the methyltransferase superfamily. Rsm22 family. It in the C-terminal section; belongs to the COX11/CtaG family. Associates with the mitochondrial ribosome (mitoribosome). Only transiently interacts with the mitoribosome. Specific enzymatic cleavages in vivo by mitochondrial processing peptidase (MPP) yield mature proteins including rsm22-2 and cox11-2.

Its subcellular location is the mitochondrion. It localises to the mitochondrion inner membrane. Functionally, mitochondrial ribosome (mitoribosome) assembly factor. Binds at the interface of the head and body domains of the mitochondrial small ribosomal subunit (mt-SSU), occluding the mRNA channel and preventing compaction of the head domain towards the body. Probable inactive methyltransferase: retains the characteristic folding and ability to bind S-adenosyl-L-methionine, but it probably lost its methyltransferase activity. Its function is as follows. Exerts its effect at some terminal stage of cytochrome c oxidase synthesis, probably by being involved in the insertion of the copper B into subunit I. In Schizosaccharomyces pombe (strain 972 / ATCC 24843) (Fission yeast), this protein is Rsm22-cox11 tandem protein 2, mitochondrial (cox1102).